Consider the following 198-residue polypeptide: Dephospho-CoA kinase (198 aa).

The DPCK domain occupies 3–198 (VVGLTGGIGA…HRRYSLLAAA (196 aa)). Residue 11 to 16 (GAGKST) participates in ATP binding.

This sequence belongs to the CoaE family.

It localises to the cytoplasm. It carries out the reaction 3'-dephospho-CoA + ATP = ADP + CoA + H(+). It functions in the pathway cofactor biosynthesis; coenzyme A biosynthesis; CoA from (R)-pantothenate: step 5/5. Catalyzes the phosphorylation of the 3'-hydroxyl group of dephosphocoenzyme A to form coenzyme A. In Methylococcus capsulatus (strain ATCC 33009 / NCIMB 11132 / Bath), this protein is Dephospho-CoA kinase.